The chain runs to 183 residues: Adenine phosphoribosyltransferase (183 aa).

It belongs to the purine/pyrimidine phosphoribosyltransferase family. Homodimer.

The protein resides in the cytoplasm. It catalyses the reaction AMP + diphosphate = 5-phospho-alpha-D-ribose 1-diphosphate + adenine. It functions in the pathway purine metabolism; AMP biosynthesis via salvage pathway; AMP from adenine: step 1/1. Functionally, catalyzes a salvage reaction resulting in the formation of AMP, that is energically less costly than de novo synthesis. This is Adenine phosphoribosyltransferase from Salmonella paratyphi C (strain RKS4594).